A 288-amino-acid chain; its full sequence is Nucleotide-binding protein NE1849 (288 aa).

Residue 8 to 15 (GLSGSGKS) participates in ATP binding. 57–60 (DMRS) contacts GTP.

Belongs to the RapZ-like family.

Displays ATPase and GTPase activities. The sequence is that of Nucleotide-binding protein NE1849 from Nitrosomonas europaea (strain ATCC 19718 / CIP 103999 / KCTC 2705 / NBRC 14298).